Consider the following 146-residue polypeptide: Hemoglobin cathodic subunit beta (146 aa).

The region spanning 2–146 (QWSSSERSTI…VVSALSRQYF (145 aa)) is the Globin domain. The heme b site is built by His-63 and His-92.

The protein belongs to the globin family. In terms of assembly, heterotetramer of two alpha chains and two beta chains. As to expression, red blood cells.

Functionally, involved in oxygen transport from the gills to the various peripheral tissues. This is Hemoglobin cathodic subunit beta from Conger conger (Conger eel).